Consider the following 187-residue polypeptide: Threonylcarbamoyl-AMP synthase (187 aa).

In terms of domain architecture, YrdC-like spans 4 to 187 (ILTLDNAVAT…DARSGQILRD (184 aa)).

It belongs to the SUA5 family. TsaC subfamily.

It is found in the cytoplasm. It carries out the reaction L-threonine + hydrogencarbonate + ATP = L-threonylcarbamoyladenylate + diphosphate + H2O. Functionally, required for the formation of a threonylcarbamoyl group on adenosine at position 37 (t(6)A37) in tRNAs that read codons beginning with adenine. Catalyzes the conversion of L-threonine, HCO(3)(-)/CO(2) and ATP to give threonylcarbamoyl-AMP (TC-AMP) as the acyladenylate intermediate, with the release of diphosphate. This is Threonylcarbamoyl-AMP synthase from Xanthomonas oryzae pv. oryzae (strain MAFF 311018).